The sequence spans 651 residues: Threonine--tRNA ligase (651 aa).

The TGS domain maps to 1 to 61 (MPTIQLPDGS…DKDVSLRIIT (61 aa)). The tract at residues 242–533 (DHRLLAKKMD…LLEESAGKLP (292 aa)) is catalytic. Residues Cys333, His384, and His510 each coordinate Zn(2+). Residues 631-651 (ISQRSRKSPAPSPLFPVGGES) are disordered.

The protein belongs to the class-II aminoacyl-tRNA synthetase family. Homodimer. The cofactor is Zn(2+).

Its subcellular location is the cytoplasm. The enzyme catalyses tRNA(Thr) + L-threonine + ATP = L-threonyl-tRNA(Thr) + AMP + diphosphate + H(+). In terms of biological role, catalyzes the attachment of threonine to tRNA(Thr) in a two-step reaction: L-threonine is first activated by ATP to form Thr-AMP and then transferred to the acceptor end of tRNA(Thr). Also edits incorrectly charged L-seryl-tRNA(Thr). The protein is Threonine--tRNA ligase of Coxiella burnetii (strain RSA 493 / Nine Mile phase I).